Reading from the N-terminus, the 285-residue chain is MATKLQDGNTPCLAATPSEPRPTVLVFDSGVGGLSVYDEIRHLLPDLHYIYAFDNVAFPYGEKSEAFIVERVVAIVTAVQERYPLALAVVACNTASTVSLPALREKFDFPVVGVVPAIKPAARLTANGIVGLLATRGTVKRSYTHELIARFANECQIEMLGSAEMVELAEAKLHGEDVSLDALKRILRPWLRMKEPPDTVVLGCTHFPLLQEELLQVLPEGTRLVDSGAAIARRTAWLLEHEAPDAKSADANIAFCMAMTPEAEQLLPVLQRYGFETLEKLAVLG.

Residues 28–29 (DS) and 60–61 (YG) contribute to the substrate site. Catalysis depends on Cys-92, which acts as the Proton donor/acceptor. 93–94 (NT) is a binding site for substrate. Cys-204 acts as the Proton donor/acceptor in catalysis. A substrate-binding site is contributed by 205–206 (TH).

The protein belongs to the aspartate/glutamate racemases family.

The catalysed reaction is L-glutamate = D-glutamate. It participates in cell wall biogenesis; peptidoglycan biosynthesis. Provides the (R)-glutamate required for cell wall biosynthesis. The protein is Glutamate racemase of Shigella flexneri serotype 5b (strain 8401).